Consider the following 1096-residue polypeptide: Serine-repeat antigen protein 3 (1096 aa).

The N-terminal stretch at 1–21 (MARLSSIVFIICLLLCNNAIS) is a signal peptide. The disordered stretch occupies residues 28–205 (PSSGGTLSGG…RSPPPQVNNI (178 aa)). Over residues 77–97 (NSDSTGDSSLGSTGSNGSQPA) the composition is skewed to low complexity. An N-linked (GlcNAc...) asparagine glycan is attached at Asn-92. The span at 102–113 (KEPEPTTPKEPE) shows a compositional bias: basic and acidic residues. The segment covering 123-147 (VTPQKTAETASGKQVSPTPSENPPS) has biased composition (polar residues). Residues 149–161 (DTPKPESSSEKKV) show a composition bias toward basic and acidic residues. N-linked (GlcNAc...) asparagine glycosylation is found at Asn-204, Asn-607, Asn-637, Asn-662, Asn-671, Asn-712, Asn-892, and Asn-951. 2 disordered regions span residues 916–952 (EAKN…QANS) and 964–1006 (NQRT…ASAN). Composition is skewed to polar residues over residues 925–952 (QNYG…QANS) and 964–975 (NQRTADSNPNAQ). Positions 976-1006 (STPSPNTTVTDTVNSNTANSNTANSNTASAN) are enriched in low complexity. N-linked (GlcNAc...) asparagine glycosylation is found at Asn-981 and Asn-1039.

It belongs to the peptidase C1 family. Proteolytically cleaved in both blood and liver stage parasites. Precursor of 130 kDa is processed into 72 kDa and 55 kDa forms. Proteolytically cleaved by SUB1.

The protein resides in the cell membrane. It is found in the parasitophorous vacuole. It localises to the secreted. Its subcellular location is the host cytoplasm. Its function is as follows. Putative cysteine protease. Probably involved in merozoite release from the parasitophorous vacuole during liver stages. The polypeptide is Serine-repeat antigen protein 3 (Plasmodium berghei (strain Anka)).